Reading from the N-terminus, the 162-residue chain is Caveolin-2 (162 aa).

The Cytoplasmic portion of the chain corresponds to 1 to 86 (MGLETEKADV…FEISKYVMYK (86 aa)). Phosphotyrosine; by SRC is present on tyrosine 19. Phosphoserine is present on residues serine 20 and serine 23. Tyrosine 27 is subject to Phosphotyrosine; by SRC. Serine 36 carries the post-translational modification Phosphoserine. Positions 87–107 (FLTVFLAIPLAFIAGILFATL) form an intramembrane region, helical. At 108-162 (SCLHIWILMPFVKTCLMVLPSVQTIWKSVTDVIIAPLCTSVGRCFSSVSLQLSQD) the chain is on the cytoplasmic side.

It belongs to the caveolin family. As to quaternary structure, monomer or homodimer. Interacts with CAV1; the interaction forms a stable heterooligomeric complex that is required for targeting to lipid rafts and for caveolae formation. Tyrosine phosphorylated forms do not form heterooligomers with the Tyr-19-phosphorylated form existing as a monomer or dimer, and the Tyr-27-form as a monomer only. Interacts (tyrosine phosphorylated form) with the SH2 domain-containing proteins, RASA1, NCK1 and SRC. Interacts (tyrosine phosphorylated form) with INSR, the interaction (Tyr-27-phosphorylated form) is increased on insulin stimulation. Interacts (Tyr-19 phosphorylated form) with MAPK1 (phosphorylated form); the interaction, promoted by insulin, leads to nuclear location and MAPK1 activation. Interacts with STAT3; the interaction is increased on insulin-induced tyrosine phosphorylation leading to STAT activation. Phosphorylated on serine and tyrosine residues. CAV1 promotes phosphorylation on Ser-23 which then targets the complex to the plasma membrane, lipid rafts and caveolae. Phosphorylation on Ser-36 appears to modulate mitosis in endothelial cells. Phosphorylation on both Tyr-19 and Tyr-27 is required for insulin-induced 'Ser-727' phosphorylation of STAT3 and its activation. Phosphorylation on Tyr-19 is required for insulin-induced phosphorylation of MAPK1 and DNA binding of STAT3. Tyrosine phosphorylation is induced by both EGF and insulin (By. similarity).

Its subcellular location is the nucleus. It is found in the cytoplasm. The protein resides in the golgi apparatus membrane. The protein localises to the cell membrane. It localises to the membrane. Its subcellular location is the caveola. Functionally, may act as a scaffolding protein within caveolar membranes. Interacts directly with G-protein alpha subunits and can functionally regulate their activity. Acts as an accessory protein in conjunction with CAV1 in targeting to lipid rafts and driving caveolae formation. The Ser-36 phosphorylated form has a role in modulating mitosis in endothelial cells. Positive regulator of cellular mitogenesis of the MAPK signaling pathway. Required for the insulin-stimulated nuclear translocation and activation of MAPK1 and STAT3, and the subsequent regulation of cell cycle progression. This is Caveolin-2 (CAV2) from Pan troglodytes (Chimpanzee).